Reading from the N-terminus, the 686-residue chain is Methionine--tRNA ligase (686 aa).

Residues 15-25 (PYANGPIHLGH) carry the 'HIGH' region motif. Zn(2+)-binding residues include cysteine 146, cysteine 149, cysteine 159, and cysteine 162. The 'KMSKS' region motif lies at 332-336 (KMSKS). ATP is bound at residue lysine 335. The tRNA-binding domain maps to 585–686 (TFAKTDLRVA…DGAKPGQRIM (102 aa)).

The protein belongs to the class-I aminoacyl-tRNA synthetase family. MetG type 1 subfamily. As to quaternary structure, homodimer. Zn(2+) serves as cofactor.

Its subcellular location is the cytoplasm. The enzyme catalyses tRNA(Met) + L-methionine + ATP = L-methionyl-tRNA(Met) + AMP + diphosphate. In terms of biological role, is required not only for elongation of protein synthesis but also for the initiation of all mRNA translation through initiator tRNA(fMet) aminoacylation. This is Methionine--tRNA ligase from Psychromonas ingrahamii (strain DSM 17664 / CCUG 51855 / 37).